A 347-amino-acid chain; its full sequence is Fc receptor-like A (347 aa).

The first 27 residues, 1–27 (MKLSCMLIEWALYVCPAVLLATQMSLA), serve as a signal peptide directing secretion. 2 consecutive Ig-like C2-type domains span residues 77-166 (PFHL…ETAS) and 179-257 (PVLK…RQIS). Intrachain disulfides connect C106/C150 and C199/C247. The tract at residues 272-296 (KPATPETPPPAKAPGPLPLLPTPSD) is disordered. Positions 276 to 292 (PETPPPAKAPGPLPLLP) are enriched in pro residues.

As to quaternary structure, monomer or homodimer; disulfide-linked.

The protein resides in the cytoplasm. May be implicated in B-cell differentiation and lymphomagenesis. This is Fc receptor-like A (Fcrla) from Rattus norvegicus (Rat).